We begin with the raw amino-acid sequence, 533 residues long: Cytochrome P450 monooxygenase calL (533 aa).

A helical membrane pass occupies residues 8 to 28 (TQLALLVWGIAVCVTLAIVVP). Asn33 is a glycosylation site (N-linked (GlcNAc...) asparagine). A disordered region spans residues 123–148 (GKFKQDQSGRSKNPVPGHDVKPGQPR). Residue Asn388 is glycosylated (N-linked (GlcNAc...) asparagine). Cys467 lines the heme pocket.

It belongs to the cytochrome P450 family. Heme is required as a cofactor.

The protein localises to the membrane. It participates in secondary metabolite biosynthesis. Functionally, cytochrome P450 monooxygenase; part of the gene cluster that mediates the biosynthesis of calbistrin A and related compounds. Calbistrin A is a secondary metabolite with an interesting structure that was recently found to have bioactivity against leukemia cells. It consists of two polyketides linked by an ester bond: a bicyclic decalin containing polyketide and a linear 12 carbon dioic acid structure. The polyketide synthase calA is probably responsible for forming the decalin moiety. Because calA lacks a designated enoylreductase (ER) domain, the required activity is provided by the trans-enoyl reductase calK. Following release from the PKS, calF then probably catalyzes the oxidation and the subsequent Diels Alder cycloisomerization that lead to the formation of the decalin moiety. The decalin polyketide backbone includes two C-methyl groups, at C7 and C11 in backbone, of which the C7 position is probably methylated by the methyltransferase domain of calA. A candidate for adding the methyl group at C11, if not done by CalA, is the cluster methyltransferase calH. Several additional tailoring enzymes within the cluster could be involved in the modification of the decalin polyketide product. Those include the 3 cytochrome P450 monooxygenases CalE, CalG and CalL, of which one might be responsible for the introduction of the extra hydroxyl group attached to the backbone of the decalin moiety, at position C9 in the backbone, that allows for attachment of the linear moiety. One tailoring enzyme activity that is expected to be involved in biosynthesis of calbistrin is an acyltransferase for connecting the two polyketide synthase products, and which could be performed by the cluster acyltransferase calJ. The enzyme responsible for the biosynthesis of the linear moiety, probably a second PKS, has not been identified yet. The polypeptide is Cytochrome P450 monooxygenase calL (Penicillium decumbens).